We begin with the raw amino-acid sequence, 110 residues long: Putative protein RIG (110 aa).

In terms of tissue distribution, expressed predominantly in brain and weakly in heart and lung. Expression is reduced or undetectable in cultured glioma cells, primary glioblastoma cells and malignant glioblastoma tumors.

May serve as a molecular marker for or play a role in the malignant progression of glioblastomas. The protein is Putative protein RIG (RIG) of Homo sapiens (Human).